The sequence spans 164 residues: Protein SprT (164 aa).

The SprT-like domain occupies 13–156 (YQQAEAFFKR…LCRRCREPLV (144 aa)). Histidine 69 lines the Zn(2+) pocket. Glutamate 70 is an active-site residue. Histidine 73 is a binding site for Zn(2+).

The protein belongs to the SprT family. Requires Zn(2+) as cofactor.

It localises to the cytoplasm. The sequence is that of Protein SprT from Pseudomonas syringae pv. syringae (strain B728a).